The sequence spans 135 residues: ATP synthase epsilon chain (135 aa).

The protein belongs to the ATPase epsilon chain family. In terms of assembly, F-type ATPases have 2 components, CF(1) - the catalytic core - and CF(0) - the membrane proton channel. CF(1) has five subunits: alpha(3), beta(3), gamma(1), delta(1), epsilon(1). CF(0) has three main subunits: a, b and c.

The protein localises to the cell inner membrane. Functionally, produces ATP from ADP in the presence of a proton gradient across the membrane. The sequence is that of ATP synthase epsilon chain from Desulforapulum autotrophicum (strain ATCC 43914 / DSM 3382 / VKM B-1955 / HRM2) (Desulfobacterium autotrophicum).